A 679-amino-acid polypeptide reads, in one-letter code: MKHRGQEEMGVESTATSDEVVKVPANGNKLEGKNHKQKKLLPTNTPGDVSRVWKIEDSEALYRIEGWGQPYFSINAAGHVTVSPKGDRGGSLDLFELVNALKQRSLGLPLLIRFSDILEDRIERLNACFAKAIARYNYPGVYRGVFPVKCNQQRHLIEDLVRFGRPHQFGLEAGSKPELMIALALLDTPGSLLICNGYKDREYVETAMLSQRLGQTPIIVLEQVEEVDLVIAASHQLGIKPILGVRAKLSTQGMGRWGTSTGDRAKFGLTIPEIIQAVDKLRDADLLDSLQLMHFHIGSQISAINVIKDAIQEASRIYVELASLGANMKYLDVGGGLGVDYDGSQTNFYASKNYNMQNYANDIVAELKDTCAEKQIPVPTLISESGRAIASHQSVLIFDVLSTSDVPRDNPEPPKEGESPVINYLWETYQSINKENYQEFYHDATQFKEEAISRFNLGILRLRERAKAERLYWACCQKILDIIRQHDYVPDELEDLEKIMASIYYINLSVFQSAPDCWAIDQLFPIMPIHRLDEEPTQRGILADLTCDSDGKIDRFIDLRDVKSVLELHPFQPGEPYYMGMFLNGAYQEIMGNLHNLFGDTNAVHIQLTPKGYQIEHVVKGDTMSEVVSYVQYDSEDMVENIRQRCERALEEKRITLAESQRLLQTYEQSLRRYTYLNS.

Residues 1–43 (MKHRGQEEMGVESTATSDEVVKVPANGNKLEGKNHKQKKLLPT) form a disordered region. Residue K149 is modified to N6-(pyridoxal phosphate)lysine. Substrate is bound at residue 331 to 341 (LDVGGGLGVDY).

Belongs to the Orn/Lys/Arg decarboxylase class-II family. SpeA subfamily. Mg(2+) is required as a cofactor. Pyridoxal 5'-phosphate serves as cofactor.

It carries out the reaction L-arginine + H(+) = agmatine + CO2. In terms of biological role, catalyzes the biosynthesis of agmatine from arginine. The protein is Biosynthetic arginine decarboxylase of Nostoc sp. (strain PCC 7120 / SAG 25.82 / UTEX 2576).